Reading from the N-terminus, the 109-residue chain is Enhancer of rudimentary homolog (109 aa).

Belongs to the E(R) family. Homodimer.

Its function is as follows. May have a role in the cell cycle. The polypeptide is Enhancer of rudimentary homolog (Arabidopsis thaliana (Mouse-ear cress)).